A 134-amino-acid chain; its full sequence is MKLSSVIPWALLLSTATVDSMDWLPRNTNCGGILKEESGVIATYYGPKTNCVWTIQMPPEYHVRVSIQYLQLNCNKESLEIIDGLPGSPVLGKICEGSLMDYRSSGSIMTVKYIREPEHPASFYEVLYFQDPQA.

A signal peptide spans 1–20; that stretch reads MKLSSVIPWALLLSTATVDS. Intrachain disulfides connect Cys30–Cys51 and Cys74–Cys95. The CUB domain occupies 30–131; it reads CGGILKEESG…SFYEVLYFQD (102 aa).

It belongs to the spermadhesin family. Seminal vesicle tissue, ampulla and weakly in tissue of epididymis.

The protein resides in the secreted. Stimulates cell division and progesterone secretion of bovine granulosa cells in vitro in a potent and dose dependent manner. This protein appears to be a potent growth factor with effects on ovarian granulosa cells. The chain is Spermadhesin-1 (SPADH1) from Bos taurus (Bovine).